We begin with the raw amino-acid sequence, 253 residues long: Ubiquinone/menaquinone biosynthesis C-methyltransferase UbiE (253 aa).

Residues T76, D97, and 125–126 (NA) contribute to the S-adenosyl-L-methionine site.

Belongs to the class I-like SAM-binding methyltransferase superfamily. MenG/UbiE family.

The catalysed reaction is a 2-demethylmenaquinol + S-adenosyl-L-methionine = a menaquinol + S-adenosyl-L-homocysteine + H(+). The enzyme catalyses a 2-methoxy-6-(all-trans-polyprenyl)benzene-1,4-diol + S-adenosyl-L-methionine = a 5-methoxy-2-methyl-3-(all-trans-polyprenyl)benzene-1,4-diol + S-adenosyl-L-homocysteine + H(+). Its pathway is quinol/quinone metabolism; menaquinone biosynthesis; menaquinol from 1,4-dihydroxy-2-naphthoate: step 2/2. The protein operates within cofactor biosynthesis; ubiquinone biosynthesis. Its function is as follows. Methyltransferase required for the conversion of demethylmenaquinol (DMKH2) to menaquinol (MKH2) and the conversion of 2-polyprenyl-6-methoxy-1,4-benzoquinol (DDMQH2) to 2-polyprenyl-3-methyl-6-methoxy-1,4-benzoquinol (DMQH2). This chain is Ubiquinone/menaquinone biosynthesis C-methyltransferase UbiE, found in Nitrobacter hamburgensis (strain DSM 10229 / NCIMB 13809 / X14).